The primary structure comprises 1708 residues: Rapamycin-insensitive companion of mTOR (1708 aa).

The interval 1-789 (MAAIGRGRSL…DKANLHALIQ (789 aa)) is interaction with NBN. Residues serine 21, serine 35, and serine 265 each carry the phosphoserine modification. Residue lysine 274 forms a Glycyl lysine isopeptide (Lys-Gly) (interchain with G-Cter in ubiquitin) linkage. Positions 521–570 (LKDTEEALLINLRDSQVLQHKENLEWNWNLIGTILKWPNVNLRNYKDEQL) are ribosome-binding domain. Asparagine 543, arginine 572, and arginine 576 together coordinate ATP. Positions 1022–1041 (LSLNSESTSSRHNSESESVP) are disordered. N6-acetyllysine occurs at positions 1092 and 1095. Position 1103 is a phosphothreonine (threonine 1103). Residues 1103-1134 (TLPNKKHRSSSDPKGGKLSSESKTSNRRIRTL) form a disordered region. Lysine 1116, lysine 1119, and lysine 1125 each carry N6-acetyllysine. Threonine 1135 carries the phosphothreonine; by RPS6KB1 modification. Phosphoserine occurs at positions 1138, 1162, and 1219. The tract at residues 1204-1252 (VVESSTSSHMKIRSQSFNTDTTTSGISSMSSSPSRETVGVDATTMDTDC) is disordered. Residues 1206-1221 (ESSTSSHMKIRSQSFN) are compositionally biased toward polar residues. The span at 1222–1240 (TDTTTSGISSMSSSPSRET) shows a compositional bias: low complexity. Position 1235 is a phosphoserine; by GSK3-beta (serine 1235). Phosphothreonine is present on threonine 1271. 4 positions are modified to phosphoserine: serine 1274, serine 1278, serine 1282, and serine 1284. Residues 1275-1288 (NHLSLSKSNSVSLV) show a composition bias toward low complexity. The interval 1275–1298 (NHLSLSKSNSVSLVPPGSSHTLPR) is disordered. The residue at position 1295 (threonine 1295) is a Phosphothreonine. Phosphoserine occurs at positions 1302 and 1313. At threonine 1332 the chain carries Phosphothreonine. Phosphoserine is present on residues serine 1346 and serine 1353. Residue threonine 1376 is modified to Phosphothreonine. Residue serine 1385 is modified to Phosphoserine. Phosphotyrosine is present on tyrosine 1386. Serine 1388, serine 1396, and serine 1411 each carry phosphoserine. Zn(2+) is bound by residues histidine 1515, cysteine 1520, and cysteine 1523. Residues serine 1571, serine 1574, serine 1577, and serine 1591 each carry the phosphoserine modification. A Zn(2+)-binding site is contributed by cysteine 1651. Position 1695 is a phosphothreonine; by GSK3-alpha and GSK3-beta (threonine 1695).

It belongs to the RICTOR family. In terms of assembly, component of the mechanistic target of rapamycin complex 2 (mTORC2), consisting in two heterotretramers composed of MTOR, MLST8, RICTOR and MAPKAP1/SIN1. The mTORC2 core complex associates with PRR5/PROTOR1 and/or PRR5L/PROTOR2. Contrary to mTORC1, mTORC2 does not bind to and is not sensitive to FKBP12-rapamycin. Binds directly to MTOR and PRR5 within the TORC2 complex; interaction with MTOR is enhanced by deubiquitination of RICTOR by USP9X. Interaction with MAPKAP1 is not enhanced by RICTOR deubiquitination by USP9X. Interacts with CCDC28B. Interacts with NBN. Interacts with SIK3. Interacts with NCKAP1L. Interacts with kinases GSK3A and GSK3B; the interactions lead to phosphorylation of RICTOR at Thr-1695 which facilitates its FBXW7-mediated ubiquitination and subsequent degradation. Interacts with FBXW7; the interaction is enhanced by GSK3-mediated phosphorylation of Thr-1695 and results in RICTOR ubiquitination and degradation. Interacts with ARMH4 (via cytoplasmic tail); this interaction bridges ARMH4 to the mTORC2 complex and inhibits the mTORC2 kinase activity. Interacts with UBXN2A. Interacts with TSPAN8. (Microbial infection) Interacts with vaccinia virus protein F17; this interaction dysregulates MTOR. Phosphorylated by MTOR; when part of mTORC2. Phosphorylated at Thr-1135 by RPS6KB1 downstream of the mTORC1 complex: phosphorylation of RICTOR inhibits mTORC2 signaling by creating a binding site for 14-3-3 proteins. Phosphorylated at Thr-1695 by GSK3A and GSK3B which facilitates RICTOR ubiquitination and subsequent degradation. Phosphorylated at Ser-1235 by GSK3B in response to endoplasmic stress, inhibiting mTORC2 signaling. Post-translationally, ubiquitinated by the SCF(FBXW7) complex, leading to its degradation by the proteasome. Deubiquitinated by USP9X; deubiquitination stabilizes RICTOR and enhances its binding to MTOR, thus promoting mTORC2 complex assembly. In terms of processing, acetylated by EP300/p300 in response to glucose, leading to activate the mTORC2 complex. Acetylation by BLOC1S1/GCN5L1 in response to hypotoxic stress protects RICTOR against ubiquitination and subsequent degradation by the proteasome.

It is found in the cell membrane. The protein localises to the endoplasmic reticulum membrane. Its subcellular location is the lysosome membrane. Functionally, component of the mechanistic target of rapamycin complex 2 (mTORC2), which transduces signals from growth factors to pathways involved in proliferation, cytoskeletal organization, lipogenesis and anabolic output. In response to growth factors, mTORC2 phosphorylates and activates AGC protein kinase family members, including AKT (AKT1, AKT2 and AKT3), PKC (PRKCA, PRKCB and PRKCE) and SGK1. In contrast to mTORC1, mTORC2 is nutrient-insensitive. Within the mTORC2 complex, RICTOR probably acts as a molecular adapter. RICTOR is responsible for the FKBP12-rapamycin-insensitivity of mTORC2. mTORC2 plays a critical role in AKT1 activation by mediating phosphorylation of different sites depending on the context, such as 'Thr-450', 'Ser-473', 'Ser-477' or 'Thr-479', facilitating the phosphorylation of the activation loop of AKT1 on 'Thr-308' by PDPK1/PDK1 which is a prerequisite for full activation. mTORC2 catalyzes the phosphorylation of SGK1 at 'Ser-422' and of PRKCA on 'Ser-657'. The mTORC2 complex also phosphorylates various proteins involved in insulin signaling, such as FBXW8 and IGF2BP1. mTORC2 acts upstream of Rho GTPases to regulate the actin cytoskeleton, probably by activating one or more Rho-type guanine nucleotide exchange factors. mTORC2 promotes the serum-induced formation of stress-fibers or F-actin. This Homo sapiens (Human) protein is Rapamycin-insensitive companion of mTOR.